The following is an 848-amino-acid chain: Beta-galactosidase 11 (848 aa).

The signal sequence occupies residues 1–23; sequence MSAAAVLAVVAAAVAALAAAASG. Asn-29 carries N-linked (GlcNAc...) asparagine glycosylation. The Proton donor role is filled by Glu-189. The Nucleophile role is filled by Glu-260. N-linked (GlcNAc...) asparagine glycosylation is found at Asn-261, Asn-472, and Asn-783. Residues 750–837 enclose the SUEL-type lectin domain; it reads GGLKPTAVLS…GTLAVQAKCS (88 aa).

The protein belongs to the glycosyl hydrolase 35 family.

Its subcellular location is the secreted. The protein resides in the extracellular space. It localises to the apoplast. It carries out the reaction Hydrolysis of terminal non-reducing beta-D-galactose residues in beta-D-galactosides.. The protein is Beta-galactosidase 11 of Oryza sativa subsp. japonica (Rice).